Reading from the N-terminus, the 773-residue chain is uncharacterized protein (773 aa).

The segment at 192-219 is disordered; that stretch reads EASGTNNNPKEIEMNSDTTSSVPKSGST.

The protein localises to the cytoplasm. This is an uncharacterized protein from Schizosaccharomyces pombe (strain 972 / ATCC 24843) (Fission yeast).